The following is a 316-amino-acid chain: Olfactory receptor 1N2 (316 aa).

Residues 1–28 lie on the Extracellular side of the membrane; the sequence is MGKPGRVNQTTVSDFLLLGLSEWPEEQP. An N-linked (GlcNAc...) asparagine glycan is attached at N8. A helical membrane pass occupies residues 29 to 49; that stretch reads LLFGIFLGMYLVTMVGNLLII. At 50–60 the chain is on the cytoplasmic side; it reads LAISSDPHLHT. Residues 61-81 traverse the membrane as a helical segment; sequence PMYFFLANLSLTDACFTSASI. At 82 to 100 the chain is on the extracellular side; it reads PKMLANIHTQSQIISYSGC. C100 and C182 form a disulfide bridge. The chain crosses the membrane as a helical span at residues 101-121; it reads LAQLYFLLMFGGLDNCLLAVM. Residues 122–145 are Cytoplasmic-facing; that stretch reads AYDRYVAICQPLHYSTSMSPQLCA. Residues 146 to 166 traverse the membrane as a helical segment; sequence LMLGVCWVLTNCPALMHTLLL. Over 167–199 the chain is Extracellular; sequence TRVAFCAQKAIPHFYCDPSALLKLACSDTHVNE. Residues 200 to 220 form a helical membrane-spanning segment; that stretch reads LMIITMGLLFLTVPLLLIVFS. The Cytoplasmic portion of the chain corresponds to 221–243; sequence YVRIFWAVFVISSPGGRWKAFST. The helical transmembrane segment at 244–264 threads the bilayer; sequence CGSHLTVVLLFYGSLMGVYLL. Residues 265–274 lie on the Extracellular side of the membrane; that stretch reads PPSTYSTERE. A helical membrane pass occupies residues 275–295; that stretch reads SRAAVLYMVIIPTLNPFIYSL. The Cytoplasmic segment spans residues 296 to 316; it reads RNRDMKEALGKLFVSGKTFFL.

This sequence belongs to the G-protein coupled receptor 1 family.

The protein resides in the membrane. Functionally, odorant receptor. The chain is Olfactory receptor 1N2 (OR1N2) from Homo sapiens (Human).